The sequence spans 474 residues: MSKKLHIKTWGCQMNEYDSSKMADLLGEYQGYTLTEEAEEADILLLNTCSIREKAQEKVFHQLGRWKTLKDKNPDLIIGVGGCVASQEGKAIKDRAQCVDIIFGPQTLHRLPDMIDQVRRGEKAVIDVSFPEIEKFDRLPEPRAEGPTAFVSIMEGCSKYCSFCVVPYTRGEEVSRPSDDIILEIAQLAEQGVREVNLLGQNVNAYRGATHDGGICTFAELLRYVAAIDGIDRIRFTTSHPIEFTQDIIDVYEDTPELVSFLHLPVQSGSDRILTAMKRGHMAIEYKSIIRRLRKARPDIQISSDFIIGFPGETKEDFADTMKLIEDVAFDHSFSFIYSARPGTPAADLPDDVDMEEKKQRLAILQDRITQQAMRYSRHMMGTVQRILVEGPSVKNPMELRGRTENNRVVNFEGQPKHIGSFVDVEIVDVYTNSLRGKFIRGEDEMDLRRNLRPSDILAKHKQDDDLGVTQFKP.

Positions 3 to 120 (KKLHIKTWGC…LPDMIDQVRR (118 aa)) constitute an MTTase N-terminal domain. Residues C12, C49, C83, C157, C161, and C164 each contribute to the [4Fe-4S] cluster site. One can recognise a Radical SAM core domain in the interval 143 to 375 (RAEGPTAFVS…QDRITQQAMR (233 aa)). In terms of domain architecture, TRAM spans 378–441 (RHMMGTVQRI…TNSLRGKFIR (64 aa)).

It belongs to the methylthiotransferase family. MiaB subfamily. Monomer. [4Fe-4S] cluster is required as a cofactor.

It is found in the cytoplasm. It catalyses the reaction N(6)-dimethylallyladenosine(37) in tRNA + (sulfur carrier)-SH + AH2 + 2 S-adenosyl-L-methionine = 2-methylsulfanyl-N(6)-dimethylallyladenosine(37) in tRNA + (sulfur carrier)-H + 5'-deoxyadenosine + L-methionine + A + S-adenosyl-L-homocysteine + 2 H(+). In terms of biological role, catalyzes the methylthiolation of N6-(dimethylallyl)adenosine (i(6)A), leading to the formation of 2-methylthio-N6-(dimethylallyl)adenosine (ms(2)i(6)A) at position 37 in tRNAs that read codons beginning with uridine. This chain is tRNA-2-methylthio-N(6)-dimethylallyladenosine synthase, found in Shewanella sp. (strain ANA-3).